Consider the following 286-residue polypeptide: Putative thiosulfate sulfurtransferase (286 aa).

Residues 27 to 134 (DDPAYRLVEV…WVDNDYPTTD (108 aa)) form the Rhodanese 1 domain. Residues lysine 162 and lysine 166 each participate in a glycyl lysine isopeptide (Lys-Gly) (interchain with G-Cter in SAMP2) cross-link. The Rhodanese 2 domain maps to 164-283 (VDKGLPLVDV…WGNLVGAPVE (120 aa)). Cysteine 242 functions as the Cysteine persulfide intermediate in the catalytic mechanism. Position 247 (arginine 247) interacts with substrate.

The enzyme catalyses thiosulfate + hydrogen cyanide = thiocyanate + sulfite + 2 H(+). May be a sulfotransferase involved in the formation of thiosulfate. This chain is Putative thiosulfate sulfurtransferase (tssA), found in Haloferax volcanii (strain ATCC 29605 / DSM 3757 / JCM 8879 / NBRC 14742 / NCIMB 2012 / VKM B-1768 / DS2) (Halobacterium volcanii).